We begin with the raw amino-acid sequence, 1315 residues long: Serine/threonine-protein kinase 36 (1315 aa).

Residues 4–254 (YHVLEMIGEG…WPDLLYHPFI (251 aa)) form the Protein kinase domain. Residues 10 to 18 (IGEGSFGRV) and lysine 33 contribute to the ATP site. The active-site Proton acceptor is the aspartate 125. Disordered regions lie at residues 312 to 345 (EAMQKKHQNTGPALEQEDKTSKVAPGTAPLPRLG) and 365 to 405 (SWAE…RSTD). The segment covering 379 to 397 (RENRTTPDCERAFPEERPE) has biased composition (basic and acidic residues).

It belongs to the protein kinase superfamily. Ser/Thr protein kinase family. As to quaternary structure, interacts with SPAG16 and KIF27. It depends on Mg(2+) as a cofactor.

It is found in the cytoplasm. The protein resides in the nucleus. It localises to the cytoskeleton. The protein localises to the cilium axoneme. The catalysed reaction is L-seryl-[protein] + ATP = O-phospho-L-seryl-[protein] + ADP + H(+). The enzyme catalyses L-threonyl-[protein] + ATP = O-phospho-L-threonyl-[protein] + ADP + H(+). Its function is as follows. Serine/threonine protein kinase which plays an important role in the sonic hedgehog (Shh) pathway by regulating the activity of GLI transcription factors. Controls the activity of the transcriptional regulators GLI1, GLI2 and GLI3 by opposing the effect of SUFU and promoting their nuclear localization. GLI2 requires an additional function of STK36 to become transcriptionally active, but the enzyme does not need to possess an active kinase catalytic site for this to occur. Required for postnatal development, possibly by regulating the homeostasis of cerebral spinal fluid or ciliary function. Essential for construction of the central pair apparatus of motile cilia. In Pongo abelii (Sumatran orangutan), this protein is Serine/threonine-protein kinase 36.